Here is an 853-residue protein sequence, read N- to C-terminus: DNA mismatch repair protein MutS (853 aa).

616–623 (GPNMGGKS) is a binding site for ATP.

The protein belongs to the DNA mismatch repair MutS family.

This protein is involved in the repair of mismatches in DNA. It is possible that it carries out the mismatch recognition step. This protein has a weak ATPase activity. The protein is DNA mismatch repair protein MutS of Erwinia tasmaniensis (strain DSM 17950 / CFBP 7177 / CIP 109463 / NCPPB 4357 / Et1/99).